Here is a 91-residue protein sequence, read N- to C-terminus: DNA-binding protein HU (91 aa).

Belongs to the bacterial histone-like protein family. Homodimer.

Histone-like DNA-binding protein which is capable of wrapping DNA to stabilize it, and thus to prevent its denaturation under extreme environmental conditions. This is DNA-binding protein HU (hup) from Lactococcus lactis subsp. lactis (strain IL1403) (Streptococcus lactis).